Here is a 106-residue protein sequence, read N- to C-terminus: Cell division protein FtsB (106 aa).

Residues 1–3 (MGK) are Cytoplasmic-facing. A helical membrane pass occupies residues 4 to 21 (LTLLLLVLLGWLQYSLWL). Topologically, residues 22 to 106 (GKNGIHDYVR…SRPSTPNNTQ (85 aa)) are periplasmic. A coiled-coil region spans residues 29–70 (YVRVKNDVAMQERNNSKLKARNDQLSAEIDDLTGGQEAIEER).

This sequence belongs to the FtsB family. As to quaternary structure, part of a complex composed of FtsB, FtsL and FtsQ.

It localises to the cell inner membrane. Essential cell division protein. May link together the upstream cell division proteins, which are predominantly cytoplasmic, with the downstream cell division proteins, which are predominantly periplasmic. This is Cell division protein FtsB from Photorhabdus laumondii subsp. laumondii (strain DSM 15139 / CIP 105565 / TT01) (Photorhabdus luminescens subsp. laumondii).